A 444-amino-acid chain; its full sequence is Acyl-CoA 6-desaturase (444 aa).

Topologically, residues 1 to 130 (MGKGGNQGEG…EDMNLFKTNH (130 aa)) are cytoplasmic. Positions 18 to 95 (MPTFRWEEIQ…LKPLLIGELA (78 aa)) constitute a Cytochrome b5 heme-binding domain. The helical transmembrane segment at 131–151 (LFFFLLLSHIIVMESIAWFIL) threads the bilayer. Over 152–157 (SYFGNG) the chain is Lumenal. A helical transmembrane segment spans residues 158–178 (WIPTVITAFVLATSQAQAGWL). Topologically, residues 179–264 (QHDYGHLSVY…KYLPYNHQHE (86 aa)) are cytoplasmic. The Histidine box-1 signature appears at 180 to 184 (HDYGH). Positions 217–221 (HFQHH) match the Histidine box-2 motif. The helical transmembrane segment at 265–285 (YFFLIGPPLLIPMYFQYQIIM) threads the bilayer. The Lumenal segment spans residues 286-305 (TMIRRRDWVDLAWAISYYAR). The helical transmembrane segment at 306-326 (FFYTYIPFYGILGALVFLNFI) threads the bilayer. At 327-444 (RFLESHWFVW…ELWLDAYLHK (118 aa)) the chain is on the cytoplasmic side. The Histidine box-3 signature appears at 382–386 (QIEHH).

This sequence belongs to the fatty acid desaturase type 1 family. Expressed in the liver and brain (at protein level). Highest activity is found in the liver and adrenals followed by the testes and other organs, absent in adipose tissue.

The protein resides in the endoplasmic reticulum membrane. It localises to the microsome membrane. The catalysed reaction is (9Z,12Z)-octadecadienoyl-CoA + 2 Fe(II)-[cytochrome b5] + O2 + 2 H(+) = (6Z,9Z,12Z)-octadecatrienoyl-CoA + 2 Fe(III)-[cytochrome b5] + 2 H2O. It carries out the reaction (9Z,12Z,15Z)-octadecatrienoyl-CoA + 2 Fe(II)-[cytochrome b5] + O2 + 2 H(+) = (6Z,9Z,12Z,15Z)-octadecatetraenoyl-CoA + 2 Fe(III)-[cytochrome b5] + 2 H2O. The enzyme catalyses (9Z,12Z,15Z,18Z,21Z)-tetracosapentaenoyl-CoA + 2 Fe(II)-[cytochrome b5] + O2 + 2 H(+) = (6Z,9Z,12Z,15Z,18Z,21Z)-tetracosahexaenoyl-CoA + 2 Fe(III)-[cytochrome b5] + 2 H2O. It catalyses the reaction (11E)-octadecenoyl-CoA + 2 Fe(II)-[cytochrome b5] + O2 + 2 H(+) = (6Z,11E)-octadecadienoyl-CoA + 2 Fe(III)-[cytochrome b5] + 2 H2O. The catalysed reaction is (11Z,14Z)-eicosadienoyl-CoA + 2 Fe(II)-[cytochrome b5] + O2 + 2 H(+) = (8Z,11Z,14Z)-eicosatrienoyl-CoA + 2 Fe(III)-[cytochrome b5] + 2 H2O. It carries out the reaction (11Z,14Z,17Z)-eicosatrienoyl-CoA + 2 Fe(II)-[cytochrome b5] + O2 + 2 H(+) = (8Z,11Z,14Z,17Z)-eicosatetraenoyl-CoA + 2 Fe(III)-[cytochrome b5] + 2 H2O. It functions in the pathway lipid metabolism; polyunsaturated fatty acid biosynthesis. Functionally, involved in the biosynthesis of highly unsaturated fatty acids (HUFA) from the essential polyunsaturated fatty acids (PUFA) linoleic acid (LA) (18:2n-6) and alpha-linolenic acid (ALA) (18:3n-3) precursors, acting as a fatty acyl-coenzyme A (CoA) desaturase that introduces a cis double bond at carbon 6 of the fatty acyl chain. Catalyzes the first and rate limiting step in this pathway which is the desaturation of LA (18:2n-6) and ALA (18:3n-3) into gamma-linoleate (GLA) (18:3n-6) and stearidonate (18:4n-3), respectively. Subsequently, in the biosynthetic pathway of HUFA n-3 series, it desaturates tetracosapentaenoate (24:5n-3) to tetracosahexaenoate (24:6n-3), which is then converted to docosahexaenoate (DHA)(22:6n-3), an important lipid for nervous system function. It can also desaturate (11E)-octadecenoate (trans-vaccenoate) at carbon 6 generating (6Z,11E)-octadecadienoate. In addition to Delta-6 activity, this enzyme exhibits Delta-8 activity with slight biases toward n-3 fatty acyl-CoA substrates. The sequence is that of Acyl-CoA 6-desaturase (Fads2) from Rattus norvegicus (Rat).